We begin with the raw amino-acid sequence, 2391 residues long: Filaggrin-2 (2391 aa).

The S-100-like stretch occupies residues 1–81; that stretch reads MTDLLRSVVT…TEFLLMIFKL (81 aa). EF-hand domains lie at 8–43 and 49–84; these read VVTV…ELHP and DDPD…LTMA. The Ca(2+) site is built by Asp62, Asp64, Asp66, Arg68, and Glu73. 3 disordered regions span residues 96–275, 349–369, and 406–2391; these read ASGS…DSGR, SYSQ…CGGQ, and NSSS…LSRH. Residues 98-107 are compositionally biased toward basic residues; it reads GSKKHRRGHR. The span at 111-121 shows a compositional bias: acidic residues; the sequence is EESETEEDEED. Positions 149-163 are enriched in basic residues; that stretch reads GTVKCRHGSNSRRLG. The span at 166–176 shows a compositional bias: polar residues; the sequence is GNLSSSGNQEG. Residues 193 to 209 are compositionally biased toward basic and acidic residues; that stretch reads GKDRHGSSSVELRERIN. The stretch at 245–289 is one Filaggrin 1 repeat; the sequence is ETSGHESNSTQSRIREQKLGSSCSGSGDSGRRSHACGYSNSSGCG. Polar residues-rich tracts occupy residues 420 to 442 and 449 to 476; these read GSGS…SSGF and SGQT…SGKT. Residues 421 to 466 form a Filaggrin 2 repeat; that stretch reads SGSSQSTSFEQHGTGLSQSSGFEQHVCGSGQTCGQHESTSSQSLGY. Residues 480 to 507 are compositionally biased toward gly residues; it reads GQHGSGSGQSSGFGQCGSGSGQSSGFGQ. The segment covering 508 to 562 has biased composition (low complexity); that stretch reads HGSVSGQSSGFGQHGSVSGQSSGFGQHESRSRQSSYGQHGSGSSQSSGYGQYGSR. Over residues 568 to 604 the composition is skewed to gly residues; the sequence is GQHGLGSGQSTGFGQYGSGSGQSSGFGQHGSGSGQSS. Low complexity predominate over residues 605 to 655; it reads GFGQHESRSGQSSYGQHSSGSSQSSGYGQHGSRQTSGFGQHGSGSSQSTGF. Positions 656–666 are enriched in gly residues; sequence GQYGSGSGQSS. Over residues 667 to 734 the composition is skewed to low complexity; that stretch reads GFGQHVSGSG…SSGQSSSFGQ (68 aa). Positions 735 to 756 are enriched in gly residues; sequence HGSGSGQSSGFGQHGSGSGQSS. Residues 757 to 807 are compositionally biased toward low complexity; sequence GFGQHESRSGQSSYGQHSSGSSQSSGYGQHGSRQTSGFGQHGSGSSQSTGF. Gly residues predominate over residues 808-831; sequence GQYGSGSGQSAGFGQHGSGSGQSS. The segment covering 832-884 has biased composition (low complexity); it reads GFGQHESRSHQSSYGQHGSGSSQSSGYGQHGSSSGQTSGFGQHRSSSGQYSGF. The segment covering 885 to 908 has biased composition (gly residues); it reads GQHGSGSGQSSGFGQHGTGSGQYS. Residues 918 to 956 are compositionally biased toward low complexity; it reads HQSSYGQHGSGSSQSSGYGQHGSSSGQTFGFGQHRSGSG. A compositionally biased stretch (gly residues) spans 957 to 972; it reads QSSGFGQHGSGSGQSS. 2 stretches are compositionally biased toward low complexity: residues 973–982 and 994–1027; these read GFGQHESGSG and SSQS…GFGQ. The stretch at 1019-1051 is one Filaggrin 3 repeat; it reads SGQTTGFGQHRSSSGQYSGFGQHGSGSDQSSGF. A compositionally biased stretch (gly residues) spans 1052 to 1062; the sequence is GQHGTGSGQSS. The span at 1063–1098 shows a compositional bias: low complexity; sequence GFGQYESRSRQSSYGQHGSGSSQSSGYGQHGSNSGQ. A Filaggrin 4 repeat occupies 1097-1141; the sequence is GQTSGFGQHRPGSGQSSGFGQYGSGSGQSSGFGQHGSGTGKSSGF. The span at 1111 to 1137 shows a compositional bias: gly residues; sequence QSSGFGQYGSGSGQSSGFGQHGSGTGK. Residues 1148 to 1174 show a composition bias toward low complexity; sequence SGQSSYGQHGTGSSQSSGCGQHESGSG. Positions 1175-1198 are enriched in polar residues; that stretch reads PTTSFGQHVSGSDNFSSSGQHISD. A compositionally biased stretch (gly residues) spans 1206-1220; the sequence is GQYGSGSGQSTGLGQ. Residues 1226-1249 are compositionally biased toward polar residues; it reads VESGSTVHGRQETTHGQTINTTRH. Residues 1250–1263 are compositionally biased toward low complexity; it reads SQSGQGQSTQTGSR. Position 1276 is a phosphoserine (Ser1276). The span at 1329–1343 shows a compositional bias: polar residues; sequence HGQSTQTGSRTSGRQ. Residues 1346-1355 show a composition bias toward basic and acidic residues; it reads SHSDATDSEV. A compositionally biased stretch (polar residues) spans 1366-1377; the sequence is QEQTHSQAGSQH. A compositionally biased stretch (basic and acidic residues) spans 1378–1390; the sequence is GESESTVHERHET. The span at 1406 to 1416 shows a compositional bias: low complexity; sequence HGQSTQRGSRT. 2 positions are modified to phosphoserine: Ser1427 and Ser1428. Residues 1439-1459 are compositionally biased toward polar residues; it reads RPQSQEQTHGQAGSQHGESGS. Residues 1455–1510 form a Filaggrin 5 repeat; that stretch reads GESGSTVHGRHGTTHGQTGDTTRHAHYHHGKSTQRGSSTTGRRGSGHSESSDSEVH. The span at 1487 to 1496 shows a compositional bias: low complexity; it reads TQRGSSTTGR. Residues Ser1504 and Ser1505 each carry the phosphoserine modification. A compositionally biased stretch (low complexity) spans 1510–1529; sequence HSGGSHTHSGHTHGQSGSQH. Positions 1544-1559 are enriched in polar residues; that stretch reads HGQTGDTTRHSYSGHE. The span at 1560–1572 shows a compositional bias: low complexity; sequence QTTQTGSRTTGRQ. Composition is skewed to basic and acidic residues over residues 1575-1584 and 1605-1618; these read SHSESTDSEV and QHEE…ERHG. Phosphoserine is present on Ser1579. The Filaggrin 6 repeat unit spans residues 1607-1662; sequence EEPEFTVHERHGTTHGQIGDTTGHSHSGHGQSTQRGSRTTGRQRSSHSESSDSEVH. Over residues 1627–1649 the composition is skewed to low complexity; that stretch reads TTGHSHSGHGQSTQRGSRTTGRQ. Over residues 1652–1661 the composition is skewed to basic and acidic residues; that stretch reads SHSESSDSEV. Residues Ser1656 and Ser1657 each carry the phosphoserine modification. Composition is skewed to low complexity over residues 1662–1686 and 1711–1720; these read HSGV…QSES and GLTTQTGSRT. Residues 1755–1768 are compositionally biased toward basic and acidic residues; it reads QHGESESIVHERHG. The Filaggrin 7 repeat unit spans residues 1757-1812; that stretch reads GESESIVHERHGTIHGQTGDTTRHAHSGHGQSTQTGSRTTGRRSSGHSEYSDSEGH. The segment covering 1784-1795 has biased composition (low complexity); that stretch reads GHGQSTQTGSRT. Phosphoserine occurs at positions 1800 and 1807. The segment covering 1834 to 1845 has biased composition (basic and acidic residues); sequence GESESIVDERHG. The span at 1849–1873 shows a compositional bias: low complexity; it reads GQTGDTSGHSQSGHGQSTQSGSSTT. A compositionally biased stretch (basic and acidic residues) spans 1879–1888; sequence GHSESSDSEV. Phosphoserine is present on residues Ser1883, Ser1884, and Ser1959. Filaggrin repeat units follow at residues 1928-1964 and 1984-2039; these read DTTE…SEGP and PESG…SEGH. Low complexity-rich tracts occupy residues 1963–1982 and 2013–2022; these read GPSG…AGSH and GQSTQRGSRT. Position 2034 is a phosphoserine (Ser2034). Low complexity-rich tracts occupy residues 2039–2059, 2114–2125, and 2162–2176; these read HSGV…SQHG, HSGVSHTHSGHT, and HGQS…TGRQ. The stretch at 2134 to 2189 is one Filaggrin 10 repeat; sequence GESGSAIHGRQGTIHGQTGDTTRHGQSGHGQSTQTGSRTTGRQRSSHSESSDSEVH. The segment covering 2179–2190 has biased composition (basic and acidic residues); the sequence is SHSESSDSEVHS. 3 stretches are compositionally biased toward low complexity: residues 2201-2211, 2219-2228, and 2238-2247; these read HSQAGSRHGQS, QGTTHGQTGD, and GQSTQRGSRT. Positions 2273 to 2288 are enriched in polar residues; the sequence is GHIQGQAGSQQRQPGS. Positions 2320-2331 are enriched in low complexity; the sequence is SRSSRASHFQSH. Positions 2367–2391 are enriched in polar residues; that stretch reads SRKSISNSHLSWSTDSTANKQLSRH.

It belongs to the S100-fused protein family. In the N-terminal section; belongs to the S-100 family. Deiminated by PADI1, PADI2 or PADI3 in vitro. The deiminated form is degraded by calpain-1/CAPN1 more quickly and into shorter peptides than the intact protein. In terms of processing, may be processed by calpain-1/CAPN1 in the uppermost epidermal layers. As to expression, expressed in skin, thymus, stomach and placenta, but not detected in heart, brain, liver, lung, bone marrow, small intestine, spleen, prostate, colon, adrenal gland, kidney, pancreas, mammary gland, bladder, thyroid, salivary gland and trachea. Weakly expressed in esophagus, tonsils and testis (at protein level). In the skin, strongly expressed in the upper stratum granulosum and lower stratum corneum, but not detected in the upper stratum corneum (at protein level). In scalp hair follicles, mainly restricted within the granular and cornified cells surrounding the infundibular outer root sheath, with weak expression in central and proximal outer root sheath (at protein level). Tends to be down-regulated in sporiatic lesions compared to non-lesional skin inthe same patients.

The protein resides in the cytoplasm. It is found in the cytoplasmic granule. Functionally, essential for normal cell-cell adhesion in the cornified cell layers. Important for proper integrity and mechanical strength of the stratum corneum of the epidermis. The protein is Filaggrin-2 (FLG2) of Homo sapiens (Human).